We begin with the raw amino-acid sequence, 160 residues long: Ribosomal RNA large subunit methyltransferase H (160 aa).

S-adenosyl-L-methionine contacts are provided by residues Leu76, Gly108, and 127-132; that span reads LGELTW.

This sequence belongs to the RNA methyltransferase RlmH family. In terms of assembly, homodimer.

Its subcellular location is the cytoplasm. The enzyme catalyses pseudouridine(1915) in 23S rRNA + S-adenosyl-L-methionine = N(3)-methylpseudouridine(1915) in 23S rRNA + S-adenosyl-L-homocysteine + H(+). In terms of biological role, specifically methylates the pseudouridine at position 1915 (m3Psi1915) in 23S rRNA. This chain is Ribosomal RNA large subunit methyltransferase H, found in Brucella anthropi (strain ATCC 49188 / DSM 6882 / CCUG 24695 / JCM 21032 / LMG 3331 / NBRC 15819 / NCTC 12168 / Alc 37) (Ochrobactrum anthropi).